Here is a 108-residue protein sequence, read N- to C-terminus: Putative septation protein SpoVG (108 aa).

It belongs to the SpoVG family.

Its function is as follows. Could be involved in septation. The protein is Putative septation protein SpoVG of Bdellovibrio bacteriovorus (strain ATCC 15356 / DSM 50701 / NCIMB 9529 / HD100).